The sequence spans 371 residues: Peptide chain release factor 2 (371 aa).

Position 251 is an N5-methylglutamine (glutamine 251).

The protein belongs to the prokaryotic/mitochondrial release factor family. Post-translationally, methylated by PrmC. Methylation increases the termination efficiency of RF2.

Its subcellular location is the cytoplasm. Functionally, peptide chain release factor 2 directs the termination of translation in response to the peptide chain termination codons UGA and UAA. The sequence is that of Peptide chain release factor 2 from Pseudarthrobacter chlorophenolicus (strain ATCC 700700 / DSM 12829 / CIP 107037 / JCM 12360 / KCTC 9906 / NCIMB 13794 / A6) (Arthrobacter chlorophenolicus).